The chain runs to 632 residues: MELNDPSIISSSQFSGELSDSDTAAATHKSQQAISNLFQKLAKKGREEKPIGSVESSTDSSNISVATSGNNKESNKKKNKKTAMLNFSSLTDPITNYKPMDLQYKTYAYSMNELYHLKPSLASASYEEDPLISELVRSLPKRKFWRLRMGPPDQKHANNHHFNGNNGGGSWKAGYKNGKNDERRMSRTKNMQGGKRRSQQDDEEKKIDQEMLEMDKNLQLGGDVGHSIADFEDWKAKMKELELKKLSKSKGISNSTAIAPRESASHETPTDLRPVIPRGPSSITDFLNLKRQDKKEESSQQTPGIPVGQPSLSKTSIEQVNELETNSDLGKSSSSRFSSFFNKSATSLPSLDNNNQVPSSNVSVVNNDGNSTPHQSGSRLMSFFKESRSSTPNAESQLLSASDKDNGKMQTLPQFQQQPQQMQPMAFTQHPPNNNAFFNGLLNKGKSETSTPPPPPPGLIAHQGPQFPVMGVPPNFPQRMMPPPPGLVQFQKDSKDVNKKEDRQLRQNKNPNGTRNSKGKQEETATPDLPQQQYMPPPPPPGFFPMHPNFPNGPMPPLPQGFPIPPNGMLPVTGQQPQPPYPNMMLQGNFPPNFQQGFGSNSPMPIPSIINANGKNVTNQLPPGLNSKKNIK.

Disordered stretches follow at residues 1–80 (MELN…KKNK), 149–204 (MGPP…DDEE), and 248–313 (KSKG…PSLS). Polar residues-rich tracts occupy residues 7 to 38 (SIIS…SNLF) and 54 to 69 (VESS…ATSG). Ser30 bears the Phosphoserine mark. Phosphoserine occurs at positions 281 and 282. Residues 288–298 (NLKRQDKKEES) show a composition bias toward basic and acidic residues. Residues Ser327 and Ser344 each carry the phosphoserine modification. The interval 347-378 (SLPSLDNNNQVPSSNVSVVNNDGNSTPHQSGS) is disordered. Residues 353–371 (NNNQVPSSNVSVVNNDGNS) show a composition bias toward low complexity. At Ser387 the chain carries Phosphoserine. 2 disordered regions span residues 429–541 (QHPP…PPPP) and 587–632 (QGNF…KNIK). ATP is bound at residue 440–447 (GLLNKGKS). The segment covering 474-486 (PNFPQRMMPPPPG) has biased composition (pro residues). Basic and acidic residues predominate over residues 492-505 (KDSKDVNKKEDRQL). 3 stretches are compositionally biased toward polar residues: residues 507-516 (QNKNPNGTRN), 590-603 (FPPN…SNSP), and 610-621 (INANGKNVTNQL).

As to quaternary structure, interacts with SMY2, SYH1 and eIF4E.

The protein localises to the cytoplasm. Can regulate translation through binding to eIF4E. Competes with eIF4G and p20 for binding to eIF4E in vivo and inhibits cap-dependent translation in vitro. Plays a role in cell growth and is implicated in the TOR signaling cascade. Functions independently of eIF4E to maintain genetic stability and to attenuate GCN4 translation upon TOR inactivation. This is Protein EAP1 (EAP1) from Saccharomyces cerevisiae (strain ATCC 204508 / S288c) (Baker's yeast).